The following is a 526-amino-acid chain: GMP synthase [glutamine-hydrolyzing] (526 aa).

One can recognise a Glutamine amidotransferase type-1 domain in the interval 9-208 (RILILDFGSQ…VKDICGCECL (200 aa)). Cysteine 86 functions as the Nucleophile in the catalytic mechanism. Catalysis depends on residues histidine 182 and glutamate 184. Positions 209–401 (WTPATIIDDA…LGLPYDMLYR (193 aa)) constitute a GMPS ATP-PPase domain. 236 to 242 (SGGVDSS) provides a ligand contact to ATP.

In terms of assembly, homodimer.

The enzyme catalyses XMP + L-glutamine + ATP + H2O = GMP + L-glutamate + AMP + diphosphate + 2 H(+). The protein operates within purine metabolism; GMP biosynthesis; GMP from XMP (L-Gln route): step 1/1. Its function is as follows. Catalyzes the synthesis of GMP from XMP. The polypeptide is GMP synthase [glutamine-hydrolyzing] (Aeromonas salmonicida (strain A449)).